The following is a 317-amino-acid chain: UV DNA damage endonuclease (317 aa).

The protein belongs to the uve1/UvsE family.

Functionally, component in a DNA repair pathway. Removal of UV LIGHT damaged nucleotides. Recognizes pyrimidine dimers and cleave a phosphodiester bond immediately 5' to the lesion. The protein is UV DNA damage endonuclease of Bacillus cereus (strain Q1).